We begin with the raw amino-acid sequence, 130 residues long: Small ribosomal subunit protein uS11 (130 aa).

Belongs to the universal ribosomal protein uS11 family. As to quaternary structure, part of the 30S ribosomal subunit. Interacts with proteins S7 and S18. Binds to IF-3.

Functionally, located on the platform of the 30S subunit, it bridges several disparate RNA helices of the 16S rRNA. Forms part of the Shine-Dalgarno cleft in the 70S ribosome. In Buchnera aphidicola subsp. Schizaphis graminum (strain Sg), this protein is Small ribosomal subunit protein uS11.